The sequence spans 175 residues: CEN-like protein 4 (175 aa).

Belongs to the phosphatidylethanolamine-binding protein family. In terms of tissue distribution, expressed in vegetative axillary meristems but not in the main shoot meristem.

It localises to the cytoplasm. May form complexes with phosphorylated ligands by interfering with kinases and their effectors. The polypeptide is CEN-like protein 4 (CET4) (Nicotiana tabacum (Common tobacco)).